The following is a 615-amino-acid chain: MPIQVLPPQLANQIAAGEVVERPASVVKELVENSLDAGATRIDIDIERGGAKLIRIRDNGCGIKKDELALALARHATSKIASLDDLEAIISLGFRGEALASISSVSRLTLTSRTAEQQEAWQAYAEGRDMDVTVKPAAHPVGTTLEVLDLFYNTPARRKFLRTEKTEFSHIDEIIRRIALARFDVTINLSHNGKIVRQYRAVPEGGQKERRLGAICGTAFLEQALAIEWQHGDLTLRGWVADPNHTTPALAEIQYCYVNGRMMRDRLINHAIRQACEDKLGADQQPAFVLYLEIDPHQVDVNVHPAKHEVRFHQSRLVHDFIYQGVLSVLQQQLETPLPLDDEPQPAPRSIPENRVAAGRNHFAEPAAREPVAPRYTPAPASGSRPAAPWPNAQPGYQKQQGEVYRQLLQTPAPMQKLKAPEPQEPALAANSQSFGRVLTIVHSDCALLERDGNISLLALPVAERWLRQVQLTPGEAPVCAQPLLIPLRLKVSGEEKSALEKAQSALAELGIDFQSDAQHVTIRAVPLPLRQQNLQILIPELIGYLAKQSVFEPGNIAQWIARNLMSEHAQWSMAQAITLLADVERLCPQLVKTPPGGLLQSVDLHPAIKALKDE.

Residues 363-397 (FAEPAAREPVAPRYTPAPASGSRPAAPWPNAQPGY) are disordered. Positions 364-391 (AEPAAREPVAPRYTPAPASGSRPAAPWP) are enriched in low complexity.

Belongs to the DNA mismatch repair MutL/HexB family.

This protein is involved in the repair of mismatches in DNA. It is required for dam-dependent methyl-directed DNA mismatch repair. May act as a 'molecular matchmaker', a protein that promotes the formation of a stable complex between two or more DNA-binding proteins in an ATP-dependent manner without itself being part of a final effector complex. This Shigella boydii serotype 4 (strain Sb227) protein is DNA mismatch repair protein MutL.